Consider the following 137-residue polypeptide: Large ribosomal subunit protein uL16 (137 aa).

Belongs to the universal ribosomal protein uL16 family. In terms of assembly, part of the 50S ribosomal subunit.

Functionally, binds 23S rRNA and is also seen to make contacts with the A and possibly P site tRNAs. This Pseudomonas entomophila (strain L48) protein is Large ribosomal subunit protein uL16.